The following is a 132-amino-acid chain: Small ribosomal subunit protein uS8 (132 aa).

This sequence belongs to the universal ribosomal protein uS8 family. As to quaternary structure, part of the 30S ribosomal subunit. Contacts proteins S5 and S12.

Functionally, one of the primary rRNA binding proteins, it binds directly to 16S rRNA central domain where it helps coordinate assembly of the platform of the 30S subunit. The sequence is that of Small ribosomal subunit protein uS8 from Roseiflexus castenholzii (strain DSM 13941 / HLO8).